We begin with the raw amino-acid sequence, 97 residues long: Cobalt transport protein CbiN (97 aa).

2 helical membrane-spanning segments follow: residues 6-26 and 68-88; these read VLMI…YSGL and SLLF…FFGY.

It belongs to the CbiN family. As to quaternary structure, forms an energy-coupling factor (ECF) transporter complex composed of an ATP-binding protein (A component, CbiO), a transmembrane protein (T component, CbiQ) and 2 possible substrate-capture proteins (S components, CbiM and CbiN) of unknown stoichimetry.

It is found in the cell membrane. It participates in cofactor biosynthesis; adenosylcobalamin biosynthesis. In terms of biological role, part of the energy-coupling factor (ECF) transporter complex CbiMNOQ involved in cobalt import. The chain is Cobalt transport protein CbiN from Methanococcus maripaludis (strain C7 / ATCC BAA-1331).